Reading from the N-terminus, the 692-residue chain is Elongation factor G (692 aa).

Positions 8 to 282 (EKTRNIGIMA…AVIDYLPSPL (275 aa)) constitute a tr-type G domain. Residues 17–24 (AHVDAGKT), 81–85 (DTPGH), and 135–138 (NKMD) each bind GTP.

It belongs to the TRAFAC class translation factor GTPase superfamily. Classic translation factor GTPase family. EF-G/EF-2 subfamily.

The protein resides in the cytoplasm. Functionally, catalyzes the GTP-dependent ribosomal translocation step during translation elongation. During this step, the ribosome changes from the pre-translocational (PRE) to the post-translocational (POST) state as the newly formed A-site-bound peptidyl-tRNA and P-site-bound deacylated tRNA move to the P and E sites, respectively. Catalyzes the coordinated movement of the two tRNA molecules, the mRNA and conformational changes in the ribosome. This is Elongation factor G from Streptococcus agalactiae serotype Ia (strain ATCC 27591 / A909 / CDC SS700).